A 105-amino-acid polypeptide reads, in one-letter code: MEYIYASLLLHAAKKEISEENIKNVLSAAGITVDEVRLKAVAAALKEVNIDEILKTATAMPVAAVAAPAGQQTQQAAEKKEEKKEEEKKGPSEEEIGGGLSSLFG.

Met1 carries the blocked amino end (Met) modification. A compositionally biased stretch (low complexity) spans 65–76 (VAAPAGQQTQQA). A disordered region spans residues 65–105 (VAAPAGQQTQQAAEKKEEKKEEEKKGPSEEEIGGGLSSLFG). Residues 77–92 (AEKKEEKKEEEKKGPS) are compositionally biased toward basic and acidic residues.

The protein belongs to the eukaryotic ribosomal protein P1/P2 family. As to quaternary structure, part of the 50S ribosomal subunit. Homodimer, it forms part of the ribosomal stalk which helps the ribosome interact with GTP-bound translation factors. Forms a heptameric uL10/P0(P1)2(P1)2(P1)2 complex, where uL10/P0 forms an elongated spine to which the P1 dimers bind in a sequential fashion.

Forms part of the ribosomal stalk, playing a central role in the interaction of the ribosome with GTP-bound translation factors. The polypeptide is Large ribosomal subunit protein P1 (Sulfolobus acidocaldarius (strain ATCC 33909 / DSM 639 / JCM 8929 / NBRC 15157 / NCIMB 11770)).